Here is a 117-residue protein sequence, read N- to C-terminus: Ig heavy chain V region J558 (117 aa).

In terms of domain architecture, Ig-like spans 1–116 (EVQLQQSGPE…WGAGTTVTVS (116 aa)). A disulfide bridge connects residues cysteine 22 and cysteine 96.

In Mus musculus (Mouse), this protein is Ig heavy chain V region J558.